We begin with the raw amino-acid sequence, 447 residues long: Putative branched-chain amino acid carrier protein SAB1263c (447 aa).

12 helical membrane-spanning segments follow: residues 6–26, 40–60, 74–94, 114–134, 143–163, 193–213, 229–249, 290–310, 326–346, 350–370, 382–402, and 417–437; these read WVIGFTLFAMFFGAGNLIFPP, ILAFVLTGIDLPLLGVIVGAL, PKFSILFLIIIYLTIGPLFAI, SSIALFIFTIIYFIVVLYICL, IGSLLTPLLLITILAMIIKGY, GYLTMDAIAAIAFSMIVVNAV, LTAGLIAAVALIFIYISLGYI, LLGIIVALACLTTACGLIGAV, FVLVFILMSFIIANQGLNAVI, IPVLSIVYPVAITVVLLILIA, IPVIIVFILSIFSVISKLGWL, and LEWFPVAIIATILGYLVGIFV.

It belongs to the branched chain amino acid transporter family.

It localises to the cell membrane. Component of the transport system for branched-chain amino acids (leucine, isoleucine and valine), which is coupled to a proton motive force (Potential). Contributes to NaCl tolerance. The chain is Putative branched-chain amino acid carrier protein SAB1263c from Staphylococcus aureus (strain bovine RF122 / ET3-1).